A 348-amino-acid polypeptide reads, in one-letter code: Rhodopsin (348 aa).

At M1 the chain carries N-acetylmethionine. Topologically, residues 1 to 36 (MNGTEGPNFYVPFSNVTGVVRSPFEQPQYYLAEPWQ) are extracellular. 2 N-linked (GlcNAc...) asparagine glycosylation sites follow: N2 and N15. A helical membrane pass occupies residues 37–61 (FSMLAAYMFLLIVLGFPINFLTLYV). Residues 62 to 73 (TVQHKKLRTPLN) lie on the Cytoplasmic side of the membrane. A helical membrane pass occupies residues 74–96 (YILLNLAVADLFMVFGGFTTTLY). The Extracellular segment spans residues 97–110 (TSLHGYFVFGPTGC). C110 and C187 are joined by a disulfide. The helical transmembrane segment at 111 to 133 (NLEGFFATLGGEIALWSLVVLAI) threads the bilayer. The 'Ionic lock' involved in activated form stabilization motif lies at 134 to 136 (ERY). Topologically, residues 134–152 (ERYVVVCKPMSNFRFGENH) are cytoplasmic. A helical transmembrane segment spans residues 153–173 (AIMGVVFTWIMALACAAPPLV). Residues 174 to 202 (GWSRYIPEGMQCSCGIDYYTLKPEVNNES) lie on the Extracellular side of the membrane. Zn(2+) is bound at residue E201. Residues 203–224 (FVIYMFVVHFTIPMIVIFFCYG) traverse the membrane as a helical segment. Over 225–252 (QLVFTVKEAAAQQQESATTQKAEKEVTR) the chain is Cytoplasmic. The chain crosses the membrane as a helical span at residues 253 to 274 (MVIIMVIFFLICWLPYASVAFY). The Extracellular portion of the chain corresponds to 275 to 286 (IFTHQGSNFGPI). Q279 is a Zn(2+) binding site. The chain crosses the membrane as a helical span at residues 287–308 (FMTLPAFFAKSSSIYNPVIYIM). K296 carries the N6-(retinylidene)lysine modification. Topologically, residues 309 to 348 (LNKQFRNCMLTTLCCGKNPLGDDDASATASKTETSQVAPA) are cytoplasmic. 2 S-palmitoyl cysteine lipidation sites follow: C322 and C323. The tract at residues 330 to 348 (DDDASATASKTETSQVAPA) is interaction with SAG. S334 carries the phosphoserine modification. A Phosphothreonine modification is found at T336. S338 bears the Phosphoserine mark. Phosphothreonine occurs at positions 340 and 342. The residue at position 343 (S343) is a Phosphoserine.

Belongs to the G-protein coupled receptor 1 family. Opsin subfamily. As to quaternary structure, homodimer. May form a complex composed of RHO, GRK1 and RCVRN in a Ca(2+)-dependent manner; RCVRN prevents the interaction between GRK1 and RHO. Interacts with GRK1. Interacts (phosphorylated form) with SAG. Interacts with GNAT1. Interacts with GNAT3. SAG and G-proteins compete for a common binding site. Interacts with PRCD; the interaction promotes PRCD stability. Forms a complex with ASAP1 and ARF4. Forms a complex with ASAP1, RAB11A, Rabin8/RAB3IP, ARF4 and RAB11FIP3; the complex regulates Golgi-to-cilia rhodopsin/RHO transport in photoreceptors. In terms of processing, phosphorylated on some or all of the serine and threonine residues present in the C-terminal region. Contains one covalently linked retinal chromophore. Upon light absorption, the covalently bound 11-cis-retinal is converted to all-trans-retinal. After hydrolysis of the Schiff base and release of the covalently bound all-trans-retinal, active rhodopsin is regenerated by binding of a fresh molecule of 11-cis-retinal. Rod-shaped photoreceptor cells in the retina (at protein level).

The protein localises to the membrane. It localises to the cell projection. The protein resides in the cilium. It is found in the photoreceptor outer segment. Photoreceptor required for image-forming vision at low light intensity. Required for photoreceptor cell viability after birth. Light-induced isomerization of 11-cis to all-trans retinal triggers a conformational change that activates signaling via G-proteins. Subsequent receptor phosphorylation mediates displacement of the bound G-protein alpha subunit by the arrestin SAG and terminates signaling. The chain is Rhodopsin (Rho) from Mus musculus (Mouse).